Consider the following 199-residue polypeptide: MEKFSTHCGVGAPLKQSNVDTDQIIPAVYLKRITKTGFDDALFAGWRRDPEFVLNRPEYEGASVLVAGSDFGTGSSREHAVWALRDYGFRVVISSRFADIFRGNSGKQGLLAAQVEQSDVELLWKLMEEQPGVELEVDLESRTVACGGVGVPFQIDDYTRWRLMEGLDDIGLTLQHEEDIEAYEGARPSFKPTTLPARS.

It belongs to the LeuD family. LeuD type 1 subfamily. As to quaternary structure, heterodimer of LeuC and LeuD.

The catalysed reaction is (2R,3S)-3-isopropylmalate = (2S)-2-isopropylmalate. Its pathway is amino-acid biosynthesis; L-leucine biosynthesis; L-leucine from 3-methyl-2-oxobutanoate: step 2/4. Catalyzes the isomerization between 2-isopropylmalate and 3-isopropylmalate, via the formation of 2-isopropylmaleate. This Kocuria rhizophila (strain ATCC 9341 / DSM 348 / NBRC 103217 / DC2201) protein is 3-isopropylmalate dehydratase small subunit.